Reading from the N-terminus, the 593-residue chain is Aspartate--tRNA ligase (593 aa).

Glu173 is an L-aspartate binding site. Positions 197–200 (QLFK) are aspartate. Arg219 lines the L-aspartate pocket. ATP is bound by residues 219 to 221 (RDE) and Gln228. His448 is a binding site for L-aspartate. Glu482 lines the ATP pocket. Arg489 is an L-aspartate binding site. 534-537 (GLDR) serves as a coordination point for ATP.

Belongs to the class-II aminoacyl-tRNA synthetase family. Type 1 subfamily. Homodimer.

The protein localises to the cytoplasm. It catalyses the reaction tRNA(Asp) + L-aspartate + ATP = L-aspartyl-tRNA(Asp) + AMP + diphosphate. Functionally, catalyzes the attachment of L-aspartate to tRNA(Asp) in a two-step reaction: L-aspartate is first activated by ATP to form Asp-AMP and then transferred to the acceptor end of tRNA(Asp). This chain is Aspartate--tRNA ligase, found in Shewanella denitrificans (strain OS217 / ATCC BAA-1090 / DSM 15013).